A 42-amino-acid polypeptide reads, in one-letter code: Cytochrome b559 subunit beta (42 aa).

The chain crosses the membrane as a helical span at residues 17–33 (WLSIHALAVPTVFFLGA). Residue His21 participates in heme binding.

The protein belongs to the PsbE/PsbF family. In terms of assembly, heterodimer of an alpha subunit and a beta subunit. PSII is composed of 1 copy each of membrane proteins PsbA, PsbB, PsbC, PsbD, PsbE, PsbF, PsbH, PsbI, PsbJ, PsbK, PsbL, PsbM, PsbT, PsbX, PsbY, PsbZ, Psb30/Ycf12, at least 3 peripheral proteins of the oxygen-evolving complex and a large number of cofactors. It forms dimeric complexes. Heme b serves as cofactor.

It is found in the plastid. The protein resides in the chloroplast thylakoid membrane. Its function is as follows. This b-type cytochrome is tightly associated with the reaction center of photosystem II (PSII). PSII is a light-driven water:plastoquinone oxidoreductase that uses light energy to abstract electrons from H(2)O, generating O(2) and a proton gradient subsequently used for ATP formation. It consists of a core antenna complex that captures photons, and an electron transfer chain that converts photonic excitation into a charge separation. In Tupiella akineta (Green alga), this protein is Cytochrome b559 subunit beta.